Here is a 96-residue protein sequence, read N- to C-terminus: UPF0235 protein CAB243 (96 aa).

Belongs to the UPF0235 family.

The polypeptide is UPF0235 protein CAB243 (Chlamydia abortus (strain DSM 27085 / S26/3) (Chlamydophila abortus)).